A 218-amino-acid chain; its full sequence is 23 kDa integral membrane protein (218 aa).

Over 1 to 12 (MATLGTGMRCLK) the chain is Cytoplasmic. The helical transmembrane segment at 13–36 (SCVFVLNIICLLCSLVLIGAGAYV) threads the bilayer. Residues 37-55 (EVKFSQYGDNLHKVWQAAP) are Extracellular-facing. A helical membrane pass occupies residues 56 to 71 (IAIIVVGVIILIVSFL). The Cytoplasmic segment spans residues 72 to 82 (GCCGAIKENVC). A helical membrane pass occupies residues 83–108 (MLYMYAFFLVVLLIAELAAAIVAVVY). Topologically, residues 109–183 (KDRIDSEIDA…SVFGAFLKRN (75 aa)) are extracellular. An N-linked (GlcNAc...) asparagine glycan is attached at N165. The chain crosses the membrane as a helical span at residues 184 to 205 (LVIVACVAFGVCFFQLLSIVIA). Residues 206 to 218 (CCLGRQIKEYENV) lie on the Cytoplasmic side of the membrane.

It belongs to the tetraspanin (TM4SF) family.

It localises to the membrane. The protein is 23 kDa integral membrane protein of Schistosoma mansoni (Blood fluke).